The chain runs to 510 residues: GMP synthase [glutamine-hydrolyzing] (510 aa).

The Glutamine amidotransferase type-1 domain maps to 5–195 (TVVVLDFGGQ…LFEICGLRGD (191 aa)). Cysteine 82 serves as the catalytic Nucleophile. Residues histidine 169 and glutamate 171 contribute to the active site. Residues 196 to 385 (WDLSDFISEA…LGIPAEILWR (190 aa)) enclose the GMPS ATP-PPase domain. Residue 223–229 (SGGVDSS) participates in ATP binding.

As to quaternary structure, homodimer.

It carries out the reaction XMP + L-glutamine + ATP + H2O = GMP + L-glutamate + AMP + diphosphate + 2 H(+). It functions in the pathway purine metabolism; GMP biosynthesis; GMP from XMP (L-Gln route): step 1/1. Its function is as follows. Catalyzes the synthesis of GMP from XMP. In Syntrophomonas wolfei subsp. wolfei (strain DSM 2245B / Goettingen), this protein is GMP synthase [glutamine-hydrolyzing].